The sequence spans 291 residues: uncharacterized protein (291 aa).

The 61-residue stretch at 2–62 (KEKEKLIIET…SMLNYYYDKT (61 aa)) folds into the HTH tetR-type domain. The segment at residues 25-44 (SVQEIAKECKISKGAFYIYF) is a DNA-binding region (H-T-H motif).

This is an uncharacterized protein from Bacillus subtilis (strain 168).